We begin with the raw amino-acid sequence, 306 residues long: Ornithine carbamoyltransferase (306 aa).

Residues 51–54 (STRT), Gln78, Arg102, and 129–132 (HPCQ) contribute to the carbamoyl phosphate site. L-ornithine-binding positions include Asn160, Asp223, and 227–228 (SM). Residues 263 to 264 (CL) and Arg291 each bind carbamoyl phosphate.

The protein belongs to the aspartate/ornithine carbamoyltransferase superfamily. OTCase family.

The protein localises to the cytoplasm. It catalyses the reaction carbamoyl phosphate + L-ornithine = L-citrulline + phosphate + H(+). It participates in amino-acid biosynthesis; L-arginine biosynthesis; L-arginine from L-ornithine and carbamoyl phosphate: step 1/3. Functionally, reversibly catalyzes the transfer of the carbamoyl group from carbamoyl phosphate (CP) to the N(epsilon) atom of ornithine (ORN) to produce L-citrulline. The sequence is that of Ornithine carbamoyltransferase (argF) from Nostoc punctiforme (strain ATCC 29133 / PCC 73102).